The chain runs to 360 residues: Peptide chain release factor 1 (360 aa).

Gln-237 is modified (N5-methylglutamine).

It belongs to the prokaryotic/mitochondrial release factor family. Methylated by PrmC. Methylation increases the termination efficiency of RF1.

It localises to the cytoplasm. In terms of biological role, peptide chain release factor 1 directs the termination of translation in response to the peptide chain termination codons UAG and UAA. In Teredinibacter turnerae (strain ATCC 39867 / T7901), this protein is Peptide chain release factor 1.